Reading from the N-terminus, the 126-residue chain is Precursor of CEP2 (126 aa).

Positions 1-19 (MKLFIITVVTILTISRVFD) are cleaved as a signal peptide. A propeptide spanning residues 20-80 (KTPATTEARK…ENNLKNRFIN (61 aa)) is cleaved from the precursor. 2 positions are modified to hydroxyproline: proline 84 and proline 87. A propeptide spanning residues 96–105 (PRVLNNKFTN) is cleaved from the precursor. Hydroxyproline occurs at positions 109, 112, and 116. A propeptide spanning residues 121–126 (PGVVNV) is cleaved from the precursor.

It belongs to the C-terminally encoded plant signaling peptide (CEP) family. As to quaternary structure, interacts with CEP receptors (e.g. CEPR1 and CEPR2). The mature small signaling peptide is generated by proteolytic processing of the longer precursor. Mostly expressed in roots. Present in cotyledons, shoot apical meristem (SAM), leaves, inflorescence stems and flowers.

It is found in the secreted. The protein localises to the extracellular space. Its subcellular location is the apoplast. Its function is as follows. Extracellular signaling peptide that represses primary root growth rate. Negatively regulates the number of leaves and flowering, and modulates leaf morphology. Regulates systemic nitrogen (N)-demand signaling. Mediates up-regulation of genes involved in N uptake and assimilation pathways. This is Precursor of CEP2 from Arabidopsis thaliana (Mouse-ear cress).